Here is a 180-residue protein sequence, read N- to C-terminus: MFHATTILAYKGKNKSVIGGDGQVSFGNTVLKGNAIKIRKLNNGKVLAGFAGSTADAFNLFDMFENLLQSSKGDLLKAAIDFSKEWRKDKYLRKLEAMMLVLDRNHIFLLSGTGDVVEPEDGQIAAIGSGGNYALSAARALAKHANLDEEELVKSSLQIAGEICIYTNTNIKTYVIEDEK.

Residue Thr-5 is part of the active site. Residues Gly-161, Cys-164, and Thr-167 each contribute to the Na(+) site.

The protein belongs to the peptidase T1B family. HslV subfamily. As to quaternary structure, a double ring-shaped homohexamer of HslV is capped on each side by a ring-shaped HslU homohexamer. The assembly of the HslU/HslV complex is dependent on binding of ATP.

The protein localises to the cytoplasm. It catalyses the reaction ATP-dependent cleavage of peptide bonds with broad specificity.. With respect to regulation, allosterically activated by HslU binding. Protease subunit of a proteasome-like degradation complex believed to be a general protein degrading machinery. This chain is ATP-dependent protease subunit HslV, found in Campylobacter jejuni subsp. doylei (strain ATCC BAA-1458 / RM4099 / 269.97).